The primary structure comprises 657 residues: Zinc finger protein 630 (657 aa).

One can recognise a KRAB domain in the interval 8–79 (VTFEDVAVDF…ESELSRWIYP (72 aa)). C2H2-type zinc fingers lie at residues 263–285 (NVCSMCGKAFIKKSQLIIHQRIH) and 291–313 (YVCGDCRKAFSEKSHLIVHQRIH). The segment at 319–341 (YECTKYGRAFSRKSPFTVHQRVH) adopts a C2H2-type 3; degenerate zinc-finger fold. C2H2-type zinc fingers lie at residues 347–369 (YECFECPKAFSQKSHLIIHQRVH), 375–397 (FECSECRKAFCEMSHLFIHQITH), 403–425 (YECTECGKTFPRKTQLIIHQRTH), 431–453 (YKCGECGKTFCQQSHLIGHQRIH), 459–481 (YVCTDCGKAFSQKSHLTGHQRLH), 487–509 (YMCTECGKSFSQKSPLIIHQRIH), 515–537 (YQCGECGKTFSQKSLLIIHLRVH), 543–565 (YECTECGRAFSLKSHLILHQRGH), and 571–593 (YECSECGKAFCGKSPLIIHQKTH). Residues 599–621 (PECAESGMTFFWKSQMITYQRRH) form a C2H2-type 13; degenerate zinc finger. A C2H2-type 14; degenerate zinc finger spans residues 627–649 (SRCSDCGKAFCQHVYFTGHQNPY).

The protein belongs to the krueppel C2H2-type zinc-finger protein family.

It localises to the nucleus. Its function is as follows. May be involved in transcriptional regulation. This chain is Zinc finger protein 630 (ZNF630), found in Homo sapiens (Human).